A 359-amino-acid chain; its full sequence is DNA ligase (359 aa).

ATP is bound by residues 32 to 35 (EIKY), R39, 55 to 57 (RVS), and E93. K34 serves as the catalytic N6-AMP-lysine intermediate. A divalent metal cation is bound at residue E217. Residues K232 and K238 each contribute to the ATP site.

This sequence belongs to the ATP-dependent DNA ligase family. It depends on a divalent metal cation as a cofactor.

The enzyme catalyses ATP + (deoxyribonucleotide)n-3'-hydroxyl + 5'-phospho-(deoxyribonucleotide)m = (deoxyribonucleotide)n+m + AMP + diphosphate.. DNA ligase that seals nicks in double-stranded DNA during DNA replication, DNA recombination and DNA repair in an ATP-dependent reaction. Binds specifically to DNA nicks containing a 3'-OH and a 5'-phosphate group. In Escherichia phage T7 (Bacteriophage T7), this protein is DNA ligase.